A 257-amino-acid chain; its full sequence is Pyridoxine 5'-phosphate synthase (257 aa).

N6 serves as a coordination point for 3-amino-2-oxopropyl phosphate. Residue D8–H9 participates in 1-deoxy-D-xylulose 5-phosphate binding. Position 17 (R17) interacts with 3-amino-2-oxopropyl phosphate. Residue H42 is the Proton acceptor of the active site. 1-deoxy-D-xylulose 5-phosphate is bound by residues R44 and H49. E69 (proton acceptor) is an active-site residue. Residue T99 coordinates 1-deoxy-D-xylulose 5-phosphate. H211 functions as the Proton donor in the catalytic mechanism. 3-amino-2-oxopropyl phosphate-binding positions include G212 and G233–Q234.

The protein belongs to the PNP synthase family. As to quaternary structure, homooctamer; tetramer of dimers.

It localises to the cytoplasm. The enzyme catalyses 3-amino-2-oxopropyl phosphate + 1-deoxy-D-xylulose 5-phosphate = pyridoxine 5'-phosphate + phosphate + 2 H2O + H(+). It participates in cofactor biosynthesis; pyridoxine 5'-phosphate biosynthesis; pyridoxine 5'-phosphate from D-erythrose 4-phosphate: step 5/5. In terms of biological role, catalyzes the complicated ring closure reaction between the two acyclic compounds 1-deoxy-D-xylulose-5-phosphate (DXP) and 3-amino-2-oxopropyl phosphate (1-amino-acetone-3-phosphate or AAP) to form pyridoxine 5'-phosphate (PNP) and inorganic phosphate. In Campylobacter fetus subsp. fetus (strain 82-40), this protein is Pyridoxine 5'-phosphate synthase.